The chain runs to 110 residues: MQSIAKLRAARISAQKARLVADQIRGKHVNDAVEILTFSQKKAAAIILKVLNSAIANAENNEGADIDELHVAEIQVGEGMTMKRFRARAKGRGNRICKRTSNIFVRVQER.

This sequence belongs to the universal ribosomal protein uL22 family. As to quaternary structure, part of the 50S ribosomal subunit.

This protein binds specifically to 23S rRNA; its binding is stimulated by other ribosomal proteins, e.g. L4, L17, and L20. It is important during the early stages of 50S assembly. It makes multiple contacts with different domains of the 23S rRNA in the assembled 50S subunit and ribosome. Its function is as follows. The globular domain of the protein is located near the polypeptide exit tunnel on the outside of the subunit, while an extended beta-hairpin is found that lines the wall of the exit tunnel in the center of the 70S ribosome. This Dichelobacter nodosus (strain VCS1703A) protein is Large ribosomal subunit protein uL22.